Here is a 308-residue protein sequence, read N- to C-terminus: HTH-type transcriptional activator AllS (308 aa).

The HTH lysR-type domain maps to 2–59; the sequence is FDPETLRTFISVAETGSFSKAAERLCKTTATISYRIKLLEENTGVGLFFRTTRSVSLT. Residues 19 to 38 constitute a DNA-binding region (H-T-H motif); that stretch reads FSKAAERLCKTTATISYRIK.

The protein belongs to the LysR transcriptional regulatory family.

Positive regulator essential for the expression of allD operon. Binds to the allD promoter. The polypeptide is HTH-type transcriptional activator AllS (allS) (Salmonella paratyphi A (strain ATCC 9150 / SARB42)).